Here is a 274-residue protein sequence, read N- to C-terminus: Large ribosomal subunit protein uL2 (274 aa).

A disordered region spans residues 224–256 (AMNPIDHPHGGGEGRTGEGRHAVDPWGNLTKGY). Basic and acidic residues predominate over residues 229-246 (DHPHGGGEGRTGEGRHAV).

The protein belongs to the universal ribosomal protein uL2 family. In terms of assembly, part of the 50S ribosomal subunit. Forms a bridge to the 30S subunit in the 70S ribosome.

In terms of biological role, one of the primary rRNA binding proteins. Required for association of the 30S and 50S subunits to form the 70S ribosome, for tRNA binding and peptide bond formation. It has been suggested to have peptidyltransferase activity; this is somewhat controversial. Makes several contacts with the 16S rRNA in the 70S ribosome. This is Large ribosomal subunit protein uL2 from Acidovorax ebreus (strain TPSY) (Diaphorobacter sp. (strain TPSY)).